The chain runs to 234 residues: Proteasome subunit alpha type-6 (234 aa).

The residue at position 14 (S14) is a Phosphoserine. A Glycyl lysine isopeptide (Lys-Gly) (interchain with G-Cter in ubiquitin) cross-link involves residue K191.

Belongs to the peptidase T1A family. The 26S proteasome consists of a 20S proteasome core and two 19S regulatory subunits. The 20S proteasome core is composed of 28 subunits that are arranged in four stacked rings, resulting in a barrel-shaped structure. The two end rings are each formed by seven alpha subunits, and the two central rings are each formed by seven beta subunits. The catalytic chamber with the active sites is on the inside of the barrel.

The protein localises to the cytoplasm. The protein resides in the nucleus. Functionally, the proteasome degrades poly-ubiquitinated proteins in the cytoplasm and in the nucleus. It is essential for the regulated turnover of proteins and for the removal of misfolded proteins. The proteasome is a multicatalytic proteinase complex that is characterized by its ability to cleave peptides with Arg, Phe, Tyr, Leu, and Glu adjacent to the leaving group at neutral or slightly basic pH. It has an ATP-dependent proteolytic activity. The sequence is that of Proteasome subunit alpha type-6 (PRE5) from Saccharomyces cerevisiae (strain ATCC 204508 / S288c) (Baker's yeast).